The sequence spans 633 residues: Mitochondrial Rho GTPase 1 (633 aa).

The 170-residue stretch at 1–170 (MATVRICVCG…FFLCQKAVTH (170 aa)) folds into the Miro 1 domain. At 1–603 (MATVRICVCG…PRSEEDVEGK (603 aa)) the chain is on the cytoplasmic side. GTP is bound by residues 10 to 17 (GDEGTGKS), 59 to 63 (DTSAL), and 115 to 118 (NKSD). EF-hand domains lie at 186 to 221 (AAVA…CFEK) and 306 to 341 (EGYR…TPGL). Ca(2+) contacts are provided by aspartate 199, aspartate 201, aspartate 203, tyrosine 205, glutamate 210, aspartate 319, aspartate 321, aspartate 323, and glutamate 330. Residues 398–418 (NPSTTAALKVTRPRKRRKRPG) are disordered. Positions 408 to 418 (TRPRKRRKRPG) are enriched in basic residues. Residues 422-588 (RNVVLGHVLG…FVHIAEAAME (167 aa)) form the Miro 2 domain. Residues 431-438 (GPPGSGKS), 467-471 (ELPGG), and 537-540 (LKAD) contribute to the GTP site. Residues 604–624 (WMAWGIALGAVVCAGAAAVMI) form a helical; Anchor for type IV membrane protein membrane-spanning segment. The Mitochondrial intermembrane segment spans residues 625-633 (WRRVSGSGT).

It belongs to the mitochondrial Rho GTPase family.

The protein localises to the mitochondrion outer membrane. In terms of biological role, mitochondrial GTPase involved in mitochondrial trafficking. Probably involved in control of anterograde transport of mitochondria and their subcellular distribution. The polypeptide is Mitochondrial Rho GTPase 1 (gem1) (Aspergillus oryzae (strain ATCC 42149 / RIB 40) (Yellow koji mold)).